Here is a 144-residue protein sequence, read N- to C-terminus: Snaclec coagulation factor IX/factor X-binding protein subunit B1 (144 aa).

An N-terminal signal peptide occupies residues methionine 1–alanine 23. Intrachain disulfides connect cysteine 25–cysteine 36, cysteine 53–cysteine 142, and cysteine 119–cysteine 134. Residues tyrosine 32 to glutamate 143 form the C-type lectin domain.

Belongs to the snaclec family. As to quaternary structure, heterodimer of subunits A and B1; disulfide-linked. As to expression, expressed by the venom gland.

It is found in the secreted. Anticoagulant protein which binds to the gamma-carboxyglutamic acid-domain regions of factors IX (F9) and factor X (F10) in the presence of calcium with a 1 to 1 stoichiometry. This Trimeresurus stejnegeri (Chinese green tree viper) protein is Snaclec coagulation factor IX/factor X-binding protein subunit B1.